The chain runs to 213 residues: Bcl-2-related ovarian killer protein (213 aa).

S7 is modified (phosphoserine). The tract at residues 15 to 45 (MDAFDRSPTDKELVAQAKALGREYVHARLLR) is interactions with ITPR1. Glycyl lysine isopeptide (Lys-Gly) (interchain with G-Cter in ubiquitin) cross-links involve residues K25 and K32. The BH4 signature appears at 32–44 (KALGREYVHARLL). The short motif at 67–83 (VCTVLLRLGDELEQIRP) is the BH3 element. The segment at 71 to 79 (LLRLGDELE) is nuclear export signal. The short motif at 113-132 (HIFSAGITWGKVVSLYSVAA) is the BH1 element. Glycyl lysine isopeptide (Lys-Gly) (interchain with G-Cter in ubiquitin) cross-links involve residues K160 and K177. Residues 165–179 (WLRRRGGWTDVLKCV) carry the BH2 motif. The chain crosses the membrane as a helical span at residues 190–210 (WLVATLCSFGRFLKAAFFLLL).

The protein belongs to the Bcl-2 family. In terms of assembly, monomer; positively regulates apoptotic process. Homodimer. Heterodimer. Oligomer; promoted by apoptotic stimuli and BH3-only proteins; mediates constitutive activation. Interacts (via BH4 domain) with ITPR1; enhances BOK expression and stabilization; limits apoptosis and prevents ubiquitination and then degradation; protects ITPR1 from proteolysis by CASP3 during apoptosis. Interacts with ITPR2 and ITPR3; binds most strongly to ITPR2, and barely to ITPR3; regulates their expression. Interacts with XPO1; translocates to the cytoplasm. Interacts with BNIP3; promotes oligomerization. Post-translationally, ubiquitinated by AMFR/gp78 E3 ubiquitin ligase complex; mediates degradation by ubiquitin-proteasome pathway in a VCP/p97-dependent manner; prevents from proapoptotic activity; promotes degradation of newly synthesized proteins that are not ITPR1 associated. As to expression, widely expressed. Highly expressed in brain, kidney, and spleen.

It is found in the mitochondrion membrane. It localises to the endoplasmic reticulum membrane. The protein localises to the mitochondrion inner membrane. Its subcellular location is the cytoplasm. The protein resides in the nucleus. It is found in the mitochondrion. It localises to the endoplasmic reticulum. The protein localises to the mitochondrion outer membrane. Its subcellular location is the early endosome membrane. The protein resides in the recycling endosome membrane. It is found in the nucleus outer membrane. It localises to the golgi apparatus. The protein localises to the cis-Golgi network membrane. Its subcellular location is the trans-Golgi network membrane. The protein resides in the membrane. Functionally, apoptosis regulator that functions through different apoptotic signaling pathways. Plays a roles as pro-apoptotic protein that positively regulates intrinsic apoptotic process in a BAX- and BAK1-dependent manner or in a BAX- and BAK1-independent manner. In response to endoplasmic reticulum stress promotes mitochondrial apoptosis through downstream BAX/BAK1 activation and positive regulation of PERK-mediated unfolded protein response. Activates apoptosis independently of heterodimerization with survival-promoting BCL2 and BCL2L1 through induction of mitochondrial outer membrane permeabilization, in a BAX- and BAK1-independent manner, in response to inhibition of ERAD-proteasome degradation system, resulting in cytochrome c release. In response to DNA damage, mediates intrinsic apoptotic process in a TP53-dependent manner. Plays a role in granulosa cell apoptosis by CASP3 activation. Plays a roles as anti-apoptotic protein during neuronal apoptotic process, by negatively regulating poly ADP-ribose polymerase-dependent cell death through regulation of neuronal calcium homeostasis and mitochondrial bioenergetics in response to NMDA excitation. In addition to its role in apoptosis, may regulate trophoblast cell proliferation during the early stages of placental development, by acting on G1/S transition through regulation of CCNE1 expression. May also play a role as an inducer of autophagy by disrupting interaction between MCL1 and BECN1. This is Bcl-2-related ovarian killer protein from Mus musculus (Mouse).